The following is a 238-amino-acid chain: Ribonuclease PH (238 aa).

Residues arginine 86 and 124 to 126 (GTR) contribute to the phosphate site.

It belongs to the RNase PH family. In terms of assembly, homohexameric ring arranged as a trimer of dimers.

The catalysed reaction is tRNA(n+1) + phosphate = tRNA(n) + a ribonucleoside 5'-diphosphate. Functionally, phosphorolytic 3'-5' exoribonuclease that plays an important role in tRNA 3'-end maturation. Removes nucleotide residues following the 3'-CCA terminus of tRNAs; can also add nucleotides to the ends of RNA molecules by using nucleoside diphosphates as substrates, but this may not be physiologically important. Probably plays a role in initiation of 16S rRNA degradation (leading to ribosome degradation) during starvation. The sequence is that of Ribonuclease PH from Shigella dysenteriae serotype 1 (strain Sd197).